An 816-amino-acid polypeptide reads, in one-letter code: Coiled-coil and C2 domain-containing protein 1-like (816 aa).

Residues Met1–Lys11 are compositionally biased toward basic and acidic residues. 3 disordered regions span residues Met1–Pro135, Ala157–Lys176, and Ala186–Asp269. A compositionally biased stretch (acidic residues) spans Ile25–Ala47. Positions Asp73–Val85 are enriched in basic and acidic residues. Positions Ser86–Leu100 are enriched in acidic residues. Positions Pro122–Gln131 are enriched in low complexity. A DM14 1 region spans residues Ile145–Val200. The span at Pro220 to Pro243 shows a compositional bias: pro residues. DM14 regions lie at residues Ser265 to Pro317 and Leu365 to Pro419. Residues Leu355–Glu382 adopt a coiled-coil conformation. The disordered stretch occupies residues Val418–Asn492. The segment covering Pro424–Val433 has biased composition (low complexity). A compositionally biased stretch (pro residues) spans Ala434–Thr449. Residues Ala450–Lys471 show a composition bias toward low complexity. The segment covering Thr483 to Asn492 has biased composition (polar residues). A DM14 4 region spans residues Leu502–Pro556. Residues Arg637 to Tyr776 enclose the C2 domain.

The protein belongs to the CC2D1 family. In terms of assembly, interacts (via DM14 domains 1 and 3) with shrb; the interaction is direct and blocks access to the surface involved in shrb polymerization. This interaction may be required for the ESCRT-III complex role in multivesicular body formation.

Its subcellular location is the cytoplasm. It is found in the cytosol. The protein localises to the apicolateral cell membrane. The protein resides in the cell cortex. It localises to the endosome. Phosphatidyl inositol monophosphate binding protein involved in endosomal protein sorting through regulation of the endosomal sorting required for transport (ESCRT) pathway. Required for full activity of the ESCRT-III complex core component shrb/shrub, probably by preventing its inappropriate polymerisation. Required, but not essential, for the efficient generation of intraluminal vesicles (ILVs) in multivesicular bodies (MVBs). Involved in a late stage of the endosomal pathway targeting transmembrane proteins of the plasma membrane for lysosomal degradation. Plays a critical role in regulation of multiple signal transduction pathways, including the Notch and BMP/decapentaplegic (dpp) signaling pathways, through targeting of membrane bound receptors to multivesicular bodies, isolating them from the cytoplasm and targeting them for lysosomal degradation. Involved in targeting N/Notch for endosomal degradation, negatively regulating the Notch signaling pathway. Regulates Notch signaling in imaginal disk cells and follicle cells during oogenesis and multiple developmental processes, including development of wings, veins, legs, eyes and bristles. Restricts the activity of Notch to the dorsoventral (D/V) boundary of the wing imaginal disk. In external sensory organ development regulates Notch signaling during asymmetric cell division and differentiation of sensory organ precursor cells. May be involved in regulation of apoptosis and cell growth independent of Notch signaling. Involved in targeting tkv for endosomal degradation, negatively regulating the BMP/decapentaplegic (dpp) signaling pathway. Regulates the BMP/dpp signaling pathway in follicle cells during oogenesis, but not in imaginal disk cells during wing development. May be involved in differentiation or morphogenesis of peripodial epithelial cells in the developing imaginal disk. Involved in abscission of germline cells during oogenesis. The polypeptide is Coiled-coil and C2 domain-containing protein 1-like (Drosophila melanogaster (Fruit fly)).